The following is a 274-amino-acid chain: MASKSQVPYEDRARDHPNPLARRLFQIATEKQSNVAVSADVTTTKELLDLADRLGPYMVVLKTHIDILADFSAETITGLQSLSQKHNFLIFEDRKFVDIGNTVQKQYHGGALHISEWAHIVNATVLPGPGIIDALAQVASAPDFPHASDRGLLILATMTSKGSLATGQYTELSVELARKYKGFVLGFVASRSLEGVETAGKADDEDFVLFTTGVNLASKGDALGQQYQTPESAIGGGADFIISGRGIYAAPDPVDAARRYQKAGWDAYLKRVGR.

Substrate-binding positions include Asp40, 62–64 (KTH), 93–102 (DRKFVDIGNT), Tyr227, and Arg245. Lys95 functions as the Proton donor in the catalytic mechanism.

This sequence belongs to the OMP decarboxylase family.

It carries out the reaction orotidine 5'-phosphate + H(+) = UMP + CO2. Its pathway is pyrimidine metabolism; UMP biosynthesis via de novo pathway; UMP from orotate: step 2/2. The chain is Orotidine 5'-phosphate decarboxylase (URA3) from Coccidioides immitis (strain RS) (Valley fever fungus).